We begin with the raw amino-acid sequence, 603 residues long: MSTISINHVGLLRNPLHGKSKRASINKSWSLCLPRSSSASRLVKPCRVSSKTDTKPAEMTRRSGNYEPSLWDFDFIQSLDNHHPHVKEKQLKREEELIVEVKMLLGTKIEAVKQLELIDDLKNLGLSYFFRDEIKMVLTSIYNNFFENKNNQVGDLYFTALGFRLLRQHGFNVSQEIFDCFKNEKGSDFDETLIGEDTKATLQLYEASFHLREGENTLELARQISTKYLQKKVDEGSINDENLSSWIRHSLDLPLHWRIQRLEARWFLDAYAAREDKNPLIFELTKLDFNIIQATQQEELKEVSRWWNNSRLAEKLPFVRDRVVECYFWAVGLFDGHDYGFQRKVNAAVNILITAIDDVYDVYGTLDELRLFTDVIRRWDTQSIDQLPYYMQLCYLTLYNYVSDLAYNILKDRGINTIPHLHQSWVNTVEAYLKEAEWYESGYAPSLEEYLSIASISIGVIPIVIPLEVSIPNSTFHRRSPFEYHRYDILHLSAMVLRLADDLGTAQYEVETGDVPKAVQCYIKDTNASEEEAREHVRFMIGEVWKELNTAMAESDDCPFTEQGAWAAVNIGRAAQFIYLEGDGHGRFQIHQHMENLFFHPCV.

Residues 1-47 (MSTISINHVGLLRNPLHGKSKRASINKSWSLCLPRSSSASRLVKPCR) constitute a chloroplast transit peptide. Positions 357 and 361 each coordinate Mn(2+). Positions 357–361 (DDVYD) match the DDXXD motif motif. Homodimerization stretches follow at residues 363–369 (YGTLDEL) and 435–472 (EAEW…VSIP). The Mn(2+) site is built by Asp-501 and Glu-509.

It belongs to the terpene synthase family. In terms of assembly, homodimer. Requires Mn(2+) as cofactor. It depends on Mg(2+) as a cofactor.

It localises to the plastid. It is found in the chloroplast. The catalysed reaction is (2E)-geranyl diphosphate + H2O = sabinene hydrate + diphosphate. The protein operates within secondary metabolite biosynthesis; terpenoid biosynthesis. Involved in the biosynthesis of phenolic monoterpenes natural products. Monoterpene synthase which catalyzes the conversion of geranyl diphosphate (GPP) to sabinene hydrate, mainly (Z)-sabinene hydrate and to a lower extent (E)-sabinene hydrate, and the formation of minor amounts and traces of several other monoterpenes (e.g. mainly alpha-thujene, alpha-pinene and myrcene). The polypeptide is Sabinene hydrate synthase, chloroplastic (Thymus vulgaris (Thyme)).